Here is a 122-residue protein sequence, read N- to C-terminus: Small ribosomal subunit protein uS13 (122 aa).

Positions 97 to 122 (PVRGQRTKTNARTRKGPARTVAGKKK) are disordered.

It belongs to the universal ribosomal protein uS13 family. Part of the 30S ribosomal subunit. Forms a loose heterodimer with protein S19. Forms two bridges to the 50S subunit in the 70S ribosome.

Functionally, located at the top of the head of the 30S subunit, it contacts several helices of the 16S rRNA. In the 70S ribosome it contacts the 23S rRNA (bridge B1a) and protein L5 of the 50S subunit (bridge B1b), connecting the 2 subunits; these bridges are implicated in subunit movement. Contacts the tRNAs in the A and P-sites. The protein is Small ribosomal subunit protein uS13 of Geobacter sulfurreducens (strain ATCC 51573 / DSM 12127 / PCA).